Reading from the N-terminus, the 589-residue chain is Guanylate-binding protein 2 (589 aa).

The GTPase domain (Globular) stretch occupies residues 1-309 (MASEIHMLQP…GAISSGSLPC (309 aa)). The 242-residue stretch at 35 to 276 (NQPVVVVAIV…FTSYIFSYSA (242 aa)) folds into the GB1/RHD3-type G domain. GTP contacts are provided by residues 45-52 (GLYRTGKS), 181-182 (RD), and Leu-245. A Cysteine methyl ester modification is found at Cys-586. Cys-586 is lipidated: S-geranylgeranyl cysteine. Residues 587 to 589 (TIL) constitute a propeptide, removed in mature form.

The protein belongs to the TRAFAC class dynamin-like GTPase superfamily. GB1/RHD3 GTPase family. GB1 subfamily. In terms of assembly, homodimer; homodimerization occurs upon GTP-binding and is required for the association with membranous structures. Heterodimer with other family members, including GBP1, GBP3, GBP4 and GBP5. In terms of processing, isoprenylation is required for proper subcellular location. Widely expressed.

The protein localises to the cytoplasmic vesicle membrane. It localises to the golgi apparatus membrane. Its subcellular location is the cytoplasm. It is found in the perinuclear region. The catalysed reaction is GTP + H2O = GDP + phosphate + H(+). Functionally, interferon (IFN)-inducible GTPase that plays important roles in innate immunity against a diverse range of bacterial, viral and protozoan pathogens. Hydrolyzes GTP to GMP in 2 consecutive cleavage reactions, but the major reaction product is GDP. Following infection, recruited to the pathogen-containing vacuoles or vacuole-escaped bacteria and acts as a positive regulator of inflammasome assembly by promoting the release of inflammasome ligands from bacteria. Acts by promoting lysis of pathogen-containing vacuoles, releasing pathogens into the cytosol. Following pathogen release in the cytosol, promotes recruitment of proteins that mediate bacterial cytolysis: this liberates ligands that are detected by inflammasomes, such as lipopolysaccharide (LPS) that activates the non-canonical CASP4/CASP11 inflammasome or double-stranded DNA (dsDNA) that activates the AIM2 inflammasome. Confers protection to the protozoan pathogen Toxoplasma gondii. Independently of its GTPase activity, acts as an inhibitor of various viruses infectivity by inhibiting FURIN-mediated maturation of viral envelope proteins. This is Guanylate-binding protein 2 (Gbp2) from Rattus norvegicus (Rat).